Consider the following 547-residue polypeptide: Glucose-6-phosphate isomerase (547 aa).

Glutamate 351 functions as the Proton donor in the catalytic mechanism. Active-site residues include histidine 382 and lysine 509.

This sequence belongs to the GPI family.

It localises to the cytoplasm. The enzyme catalyses alpha-D-glucose 6-phosphate = beta-D-fructose 6-phosphate. Its pathway is carbohydrate biosynthesis; gluconeogenesis. The protein operates within carbohydrate degradation; glycolysis; D-glyceraldehyde 3-phosphate and glycerone phosphate from D-glucose: step 2/4. Catalyzes the reversible isomerization of glucose-6-phosphate to fructose-6-phosphate. This Coxiella burnetii (strain CbuG_Q212) (Coxiella burnetii (strain Q212)) protein is Glucose-6-phosphate isomerase.